The sequence spans 170 residues: Inosine/xanthosine triphosphatase (170 aa).

The protein belongs to the YjjX NTPase family. As to quaternary structure, homodimer. The cofactor is Mg(2+). Mn(2+) serves as cofactor.

It catalyses the reaction XTP + H2O = XDP + phosphate + H(+). The catalysed reaction is ITP + H2O = IDP + phosphate + H(+). Phosphatase that hydrolyzes non-canonical purine nucleotides such as XTP and ITP to their respective diphosphate derivatives. Probably excludes non-canonical purines from DNA/RNA precursor pool, thus preventing their incorporation into DNA/RNA and avoiding chromosomal lesions. The sequence is that of Inosine/xanthosine triphosphatase from Aliivibrio fischeri (strain MJ11) (Vibrio fischeri).